Reading from the N-terminus, the 588-residue chain is MIQHPRIGIRPTIDGRRQGVRESLEVQTMNMAKSVADLISSTLKYPDGEPVECVISPSTIGRVPEAAASHELFKKSNVCATITVTPCWCYGSETMDMSPDIPHAIWGFNGTERPGAVYLAAVLASHAQKGIPAFGIYGRDVQEANDTDIPEDVKEKLLRYARAALATGLMRDTAYLSMGSVSMGIGGSIVNPDFFQEYLGMRNESVDMTEFTRRMDRGIYDPEEFERAMVWVKEHIKEGVDRNREDLILSKEEKEKQWEFVIKMFMIGRDLMVGNPRLAELGFEEEAVGHHALVAGFQGQRQWTDHFPNGDFMETFLNTQFDWNGIRKPFVFATENDSLNGVSMLFNYLLTNTPQIFADVRTYWSPEAVKRVTGHTLEGRAAAGFLHLINSGSCTLDGTGQATRDGKPVMKPFWELEESEVQAMLENTDFPPANREYFRGGGFSTRFLTKGDMPVTMVRLNLLKGVGPVLQIAEGYTLELPEDVHHTLDNRTDPGWPTTWFAPRLTGKGAFKSVYDVMNNWGANHGAITYGHIGADLITLASMLRIPVNMHNVPEEDIFRPKNWSLFGTEDLESADYRACQLLGPLHK.

Residues glutamate 335 and aspartate 359 each act as proton acceptor in the active site. Positions 335, 359, and 525 each coordinate Mn(2+).

The protein belongs to the L-fucose isomerase family. Mn(2+) is required as a cofactor.

The protein localises to the cytoplasm. It catalyses the reaction L-fucose = L-fuculose. It functions in the pathway carbohydrate degradation; L-fucose degradation; L-lactaldehyde and glycerone phosphate from L-fucose: step 1/3. Its function is as follows. Converts the aldose L-fucose into the corresponding ketose L-fuculose. This is L-fucose isomerase from Streptococcus pneumoniae (strain 70585).